A 49-amino-acid polypeptide reads, in one-letter code: Large ribosomal subunit protein bL33 (49 aa).

It belongs to the bacterial ribosomal protein bL33 family.

In Alkaliphilus metalliredigens (strain QYMF), this protein is Large ribosomal subunit protein bL33.